The following is a 117-amino-acid chain: Putative pterin-4-alpha-carbinolamine dehydratase (117 aa).

This sequence belongs to the pterin-4-alpha-carbinolamine dehydratase family.

The catalysed reaction is (4aS,6R)-4a-hydroxy-L-erythro-5,6,7,8-tetrahydrobiopterin = (6R)-L-erythro-6,7-dihydrobiopterin + H2O. This Colwellia psychrerythraea (strain 34H / ATCC BAA-681) (Vibrio psychroerythus) protein is Putative pterin-4-alpha-carbinolamine dehydratase.